The chain runs to 49 residues: Large ribosomal subunit protein bL33 (49 aa).

This sequence belongs to the bacterial ribosomal protein bL33 family.

The sequence is that of Large ribosomal subunit protein bL33 from Streptococcus suis (strain 98HAH33).